The primary structure comprises 1274 residues: RNA-directed RNA polymerase VP2 (1274 aa).

One can recognise a RdRp catalytic domain in the interval 561–798 (LSTTSGSVVT…KLYALMGCRI (238 aa)).

Belongs to the reoviridae RNA-directed RNA polymerase family.

It localises to the virion. It carries out the reaction RNA(n) + a ribonucleoside 5'-triphosphate = RNA(n+1) + diphosphate. In terms of biological role, RNA-directed RNA polymerase that is involved in transcription and genome replication. Following infection, it catalyzes the synthesis of fully conservative plus strands. After core assembly, which consists in recruitment of one capped plus-strand for each genomic segments and polymerase complexes, the polymerase switches mode and catalyzes the synthesis of complementary minus-strands. This Aquareovirus C (isolate Golden shiner/USA/GSRV/1977) (AQRV-C) protein is RNA-directed RNA polymerase VP2 (S2).